The chain runs to 31 residues: Bacteriocin leucocin-B (31 aa).

The protein localises to the secreted. Functionally, inhibits a wide spectrum of lactic acid bacteria. This is Bacteriocin leucocin-B from Leuconostoc mesenteroides.